The sequence spans 418 residues: Light-independent protochlorophyllide reductase subunit N (418 aa).

The [4Fe-4S] cluster site is built by Cys-17, Cys-42, and Cys-103.

The protein belongs to the BchN/ChlN family. In terms of assembly, protochlorophyllide reductase is composed of three subunits; ChlL, ChlN and ChlB. Forms a heterotetramer of two ChlB and two ChlN subunits. Requires [4Fe-4S] cluster as cofactor.

It carries out the reaction chlorophyllide a + oxidized 2[4Fe-4S]-[ferredoxin] + 2 ADP + 2 phosphate = protochlorophyllide a + reduced 2[4Fe-4S]-[ferredoxin] + 2 ATP + 2 H2O. Its pathway is porphyrin-containing compound metabolism; chlorophyll biosynthesis (light-independent). In terms of biological role, component of the dark-operative protochlorophyllide reductase (DPOR) that uses Mg-ATP and reduced ferredoxin to reduce ring D of protochlorophyllide (Pchlide) to form chlorophyllide a (Chlide). This reaction is light-independent. The NB-protein (ChlN-ChlB) is the catalytic component of the complex. The polypeptide is Light-independent protochlorophyllide reductase subunit N (Prochlorococcus marinus (strain MIT 9312)).